A 721-amino-acid polypeptide reads, in one-letter code: Polyribonucleotide nucleotidyltransferase (721 aa).

Residues Asp-495 and Asp-501 each coordinate Mg(2+). One can recognise a KH domain in the interval 562–621 (PRLLSFRIDPELIGTVIGPGGRTIKGITERTNTKIDIEDSGIVTIASHDGAAAEEAQKII). In terms of domain architecture, S1 motif spans 631-699 (GEMFSGSITR…NRGRINLTLR (69 aa)). The disordered stretch occupies residues 700-721 (GVPQSGESTEVEPQPTPVAPLS).

The protein belongs to the polyribonucleotide nucleotidyltransferase family. Mg(2+) serves as cofactor.

The protein localises to the cytoplasm. The catalysed reaction is RNA(n+1) + phosphate = RNA(n) + a ribonucleoside 5'-diphosphate. Its function is as follows. Involved in mRNA degradation. Catalyzes the phosphorolysis of single-stranded polyribonucleotides processively in the 3'- to 5'-direction. The protein is Polyribonucleotide nucleotidyltransferase of Synechococcus sp. (strain CC9902).